The sequence spans 906 residues: MQDLYMVDSIVSFGVEKLWKLLSQEYERFQGVEEQITELRDDLKMLMAFLSDADAKKQTRALARNCLEEIKEITYDAEDIIEIFLLKGSVNMRSLACFPGGRREIALQITSISKRISKVIQVMQNLGIKSDIMDGVDSHAQLERKRELRHTFSSESESNLVGLEKNVEKLVEELVGNDSSHGVSITGLGGLGKTTLARQIFDHDKVKSHFDGLAWVCVSQEFTRKDVWKTILGNLSPKYKDSDLPEDDIQKKLFQLLETKKALIVFDDLWKREDWYRIAPMFPERKAGWKVLLTSRNDAIHPHCVTFKPELLTHDECWKLLQRIAFSKQKTITGYIIDKEMVKMAKEMTKHCKRLPLAVKLLGGLLDAKHTLRQWKLISENIISHIVVGGTSSNENDSSSVNHVLSLSFEGLPGYLKHCLLYLASYPEDHEIEIERLSYVWAAEGITYPGNYEGATIRDVADLYIEELVKRNMVISERDALTSRFEKCQLHDLMREICLLKAKEENFLQIVTDPTSSSSVHSLASSRSRRLVVYNTSIFSGENDMKNSKLRSLLFIPVGYSRFSMGSNFIELPLLRVLDLDGAKFKGGKLPSSIGKLIHLKYLSLYQASVTYLPSSLRNLKSLLYLNLRINSGQLINVPNVFKEMLELRYLSLPWERSSLTKLELGNLLKLETLINFSTKDSSVTDLHRMTKLRTLQILISGEGLHMETLSSALSMLGHLEDLTVTPSENSVQFKHPKLIYRPMLPDVQHFPSHLTTISLVYCFLEEDPMPTLEKLLQLKVVSLWYNAYVGRRMVCTGGGFPPLHRLEIWGLDALEEWIVEEGSMPLLHTLHIVDCKKLKEIPDGLRFISSLKELAIRTNEKVFQKKVSKGGEDYYKMQHVPLIRYNWPQEPENNEVIYSFPSPII.

Residues 20–59 (KLLSQEYERFQGVEEQITELRDDLKMLMAFLSDADAKKQT) are a coiled coil. In terms of domain architecture, NB-ARC spans 138–452 (SHAQLERKRE…AEGITYPGNY (315 aa)). An ATP-binding site is contributed by 187 to 194 (GLGGLGKT). LRR repeat units lie at residues 572–597 (LPLL…IGKL), 599–619 (HLKY…SLRN), 620–644 (LKSL…VFKE), and 825–850 (MPLL…RFIS).

Belongs to the disease resistance NB-LRR family.

Its function is as follows. Potential disease resistance protein. The protein is Putative disease resistance protein At1g59780 of Arabidopsis thaliana (Mouse-ear cress).